The primary structure comprises 272 residues: Tropinone reductase-like 1 (272 aa).

17 to 41 lines the NAD(+) pocket; the sequence is IITGGASGIGACTAELFHENGAKVV. Residue S150 participates in substrate binding. Residue Y163 is the Proton acceptor of the active site.

Belongs to the short-chain dehydrogenases/reductases (SDR) family.

In terms of biological role, has no tropinone reductase activity. The chain is Tropinone reductase-like 1 from Erythroxylum coca (Coca plant).